The sequence spans 306 residues: Prophage bactoprenol glucosyl transferase homolog (306 aa).

At 1–227 (MKISLVVPVF…ITSFSTFPLR (227 aa)) the chain is on the cytoplasmic side. The helical transmembrane segment at 228–248 (IWTYIGLVVASVAFIYGAWMI) threads the bilayer. Residues 249 to 262 (LDTIIFGNAVRGYP) lie on the Periplasmic side of the membrane. Residues 263-283 (SLLVSILFLGGIQMIGIGVLG) form a helical membrane-spanning segment. Residues 284-306 (EYIGRTYIETKKRPKYIIKRVKK) lie on the Cytoplasmic side of the membrane.

It belongs to the glycosyltransferase 2 family. GtrB subfamily.

The protein localises to the cell inner membrane. Functionally, involved in O antigen modification. Catalyzes the transfer of the glucose residue from UDP-glucose to a lipid carrier. The polypeptide is Prophage bactoprenol glucosyl transferase homolog (yfdH) (Escherichia coli (strain K12)).